Reading from the N-terminus, the 1914-residue chain is Diacylglycerol kinase eta (1914 aa).

Positions 1 to 10 (MSHLKLDTLH) are enriched in basic and acidic residues. The segment at 1 to 37 (MSHLKLDTLHVQRSPRGSRRSSRSSGRSSACSSGSIS) is disordered. Residues 23–37 (RSSGRSSACSSGSIS) show a composition bias toward low complexity. One can recognise a PH domain in the interval 82 to 175 (AIIKEGFLLK…WLGSLKTATA (94 aa)). 2 Phorbol-ester/DAG-type zinc fingers span residues 195 to 245 (HHHW…IANC) and 268 to 319 (PHQW…AVAC). Residues 350–486 (GNFSPLLVFV…DRWSIMVFEK (137 aa)) enclose the DAGKc domain. Disordered regions lie at residues 621-642 (EKDQ…SEKE), 783-805 (GANI…NTPT), 1016-1053 (TLCS…PPRI), 1116-1135 (QHRG…TPTN), and 1175-1216 (PNTI…TVSL). Positions 1175–1187 (PNTILTTSTSPTK) are enriched in polar residues. The region spanning 1851 to 1914 (WSVNEVVTWL…LQAIKDLSEN (64 aa)) is the SAM domain.

This sequence belongs to the eukaryotic diacylglycerol kinase family.

It is found in the cytoplasm. It carries out the reaction a 1,2-diacyl-sn-glycerol + ATP = a 1,2-diacyl-sn-glycero-3-phosphate + ADP + H(+). In terms of biological role, phosphorylates diacylglycerol (DAG) to generate phosphatidic acid (PA). In Drosophila sechellia (Fruit fly), this protein is Diacylglycerol kinase eta.